The primary structure comprises 20 residues: ILGPVLSLVGNALGGLLKNE.

It belongs to the bombinin family. As to expression, expressed by the skin glands.

The protein localises to the secreted. Its function is as follows. Has antimicrobial activity. This is Maximin-Hu from Bombina maxima (Giant fire-bellied toad).